Here is a 147-residue protein sequence, read N- to C-terminus: D-aminoacyl-tRNA deacylase (147 aa).

The short motif at Gly137 to Pro138 is the Gly-cisPro motif, important for rejection of L-amino acids element.

The protein belongs to the DTD family. As to quaternary structure, homodimer.

It is found in the cytoplasm. The catalysed reaction is glycyl-tRNA(Ala) + H2O = tRNA(Ala) + glycine + H(+). The enzyme catalyses a D-aminoacyl-tRNA + H2O = a tRNA + a D-alpha-amino acid + H(+). Functionally, an aminoacyl-tRNA editing enzyme that deacylates mischarged D-aminoacyl-tRNAs. Also deacylates mischarged glycyl-tRNA(Ala), protecting cells against glycine mischarging by AlaRS. Acts via tRNA-based rather than protein-based catalysis; rejects L-amino acids rather than detecting D-amino acids in the active site. By recycling D-aminoacyl-tRNA to D-amino acids and free tRNA molecules, this enzyme counteracts the toxicity associated with the formation of D-aminoacyl-tRNA entities in vivo and helps enforce protein L-homochirality. This is D-aminoacyl-tRNA deacylase from Jannaschia sp. (strain CCS1).